Reading from the N-terminus, the 280-residue chain is Uroporphyrinogen-III C-methyltransferase (280 aa).

S-adenosyl-L-homocysteine contacts are provided by residues proline 24, 100–102 (GGD), 130–131 (TA), methionine 184, alanine 213, and alanine 241.

The protein belongs to the precorrin methyltransferase family. In terms of assembly, homodimer.

It carries out the reaction uroporphyrinogen III + 2 S-adenosyl-L-methionine = precorrin-2 + 2 S-adenosyl-L-homocysteine + H(+). The catalysed reaction is uroporphyrinogen III + S-adenosyl-L-methionine = precorrin-1 + S-adenosyl-L-homocysteine + H(+). It catalyses the reaction precorrin-1 + S-adenosyl-L-methionine = precorrin-2 + S-adenosyl-L-homocysteine. It functions in the pathway cofactor biosynthesis; adenosylcobalamin biosynthesis; precorrin-2 from uroporphyrinogen III: step 1/1. The protein operates within porphyrin-containing compound metabolism; siroheme biosynthesis; precorrin-2 from uroporphyrinogen III: step 1/1. With respect to regulation, S-adenosylhomocysteine is an extremely powerful competitive inhibitor of the uroporphyrinogen III methylation. SUMT exhibits a substrate inhibition phenomenon at uroporphyrinogen III concentrations above 2 uM; this property might play a regulatory role in cobalamin biosynthesis. The enzyme activity is completely insensitive to feedback inhibition by cobalamin and corrinoid intermediates. Catalyzes the two successive C-2 and C-7 methylation reactions involved in the conversion of uroporphyrinogen III to precorrin-2 via the intermediate formation of precorrin-1. It is a step in the biosynthesis of both cobalamin (vitamin B12) and siroheme. Neither uroporphyrin III nor the chlorin (factor I) is a substrate of SUMT. The protein is Uroporphyrinogen-III C-methyltransferase of Sinorhizobium sp.